A 342-amino-acid chain; its full sequence is Anthranilate phosphoribosyltransferase (342 aa).

5-phospho-alpha-D-ribose 1-diphosphate is bound by residues G79, 82-83 (GD), T87, 89-92 (NIST), 107-115 (KHCNQRISS), and S119. Residue G79 participates in anthranilate binding. Residue S91 coordinates Mg(2+). Anthranilate is bound at residue N110. R165 contributes to the anthranilate binding site. D223 and E224 together coordinate Mg(2+).

It belongs to the anthranilate phosphoribosyltransferase family. As to quaternary structure, homodimer. It depends on Mg(2+) as a cofactor.

It carries out the reaction N-(5-phospho-beta-D-ribosyl)anthranilate + diphosphate = 5-phospho-alpha-D-ribose 1-diphosphate + anthranilate. The protein operates within amino-acid biosynthesis; L-tryptophan biosynthesis; L-tryptophan from chorismate: step 2/5. Functionally, catalyzes the transfer of the phosphoribosyl group of 5-phosphorylribose-1-pyrophosphate (PRPP) to anthranilate to yield N-(5'-phosphoribosyl)-anthranilate (PRA). The chain is Anthranilate phosphoribosyltransferase from Buchnera aphidicola subsp. Acyrthosiphon pisum (strain Tuc7).